The sequence spans 1935 residues: Myosin heavy chain, fast skeletal muscle (1935 aa).

A Myosin N-terminal SH3-like domain is found at 32-81 (DAKTAFFVVDPDEMYLKGTLVSKEGGKATVKTHSGKTVTVKEDEIFPMNP). One can recognise a Myosin motor domain in the interval 85–779 (DKIEDMAMMT…LLGALEEMRD (695 aa)). Residue lysine 129 is modified to N6,N6,N6-trimethyllysine. 178-185 (GESGAGKT) contacts ATP. Actin-binding regions lie at residues 659–681 (LMTNLRSTHPHFVRCLIPNESKT) and 761–775 (HTKVFFKAGLLGALE). In terms of domain architecture, IQ spans 782–811 (LALLVTMTQALCRGYVMRKEFVKMMERRES). Residues 812–839 (IYSIQYNIRSFMNVKHWPWMKLYFKIKP) are hinge. Positions 840 to 1935 (LLKSAETEKE…RDAGKSKDEE (1096 aa)) form a coiled coil. Disordered stretches follow at residues 1589-1608 (RNSQRVIDSMQSTLDSEVRS) and 1902-1935 (HELEEAQERADVAESQVNKLRAKSRDAGKSKDEE). The segment covering 1592–1603 (QRVIDSMQSTLD) has biased composition (polar residues). Composition is skewed to basic and acidic residues over residues 1902–1913 (HELEEAQERADV) and 1924–1935 (KSRDAGKSKDEE).

The protein belongs to the TRAFAC class myosin-kinesin ATPase superfamily. Myosin family. As to quaternary structure, muscle myosin is a hexameric protein that consists of 2 heavy chain subunits (MHC), 2 alkali light chain subunits (MLC) and 2 regulatory light chain subunits (MLC-2).

It localises to the cytoplasm. The protein localises to the myofibril. In terms of biological role, muscle contraction. This is Myosin heavy chain, fast skeletal muscle from Cyprinus carpio (Common carp).